The chain runs to 265 residues: Type III pantothenate kinase (265 aa).

6 to 13 (DVGNTHTV) is an ATP binding site. 112 to 115 (GADR) provides a ligand contact to substrate. Asp-114 acts as the Proton acceptor in catalysis. A K(+)-binding site is contributed by Asp-134. Thr-137 contributes to the ATP binding site. Thr-189 is a binding site for substrate.

The protein belongs to the type III pantothenate kinase family. Homodimer. The cofactor is NH4(+). It depends on K(+) as a cofactor.

It localises to the cytoplasm. It carries out the reaction (R)-pantothenate + ATP = (R)-4'-phosphopantothenate + ADP + H(+). Its pathway is cofactor biosynthesis; coenzyme A biosynthesis; CoA from (R)-pantothenate: step 1/5. Its function is as follows. Catalyzes the phosphorylation of pantothenate (Pan), the first step in CoA biosynthesis. The chain is Type III pantothenate kinase from Streptomyces griseus subsp. griseus (strain JCM 4626 / CBS 651.72 / NBRC 13350 / KCC S-0626 / ISP 5235).